Reading from the N-terminus, the 297-residue chain is Probable endonuclease 4 (297 aa).

9 residues coordinate Zn(2+): histidine 68, histidine 109, glutamate 144, aspartate 178, histidine 181, histidine 213, aspartate 226, histidine 228, and glutamate 258.

It belongs to the AP endonuclease 2 family. Zn(2+) is required as a cofactor.

It carries out the reaction Endonucleolytic cleavage to 5'-phosphooligonucleotide end-products.. Its function is as follows. Endonuclease IV plays a role in DNA repair. It cleaves phosphodiester bonds at apurinic or apyrimidinic (AP) sites, generating a 3'-hydroxyl group and a 5'-terminal sugar phosphate. This Lysinibacillus sphaericus (strain C3-41) protein is Probable endonuclease 4.